The chain runs to 237 residues: UDP-2,3-diacylglucosamine hydrolase (237 aa).

Mn(2+) is bound by residues D9, H11, D42, N80, and H115. 80-81 lines the substrate pocket; that stretch reads NR. D123, S161, K165, K168, and H196 together coordinate substrate. The Mn(2+) site is built by H196 and H198.

The protein belongs to the LpxH family. Mn(2+) is required as a cofactor.

The protein resides in the cell inner membrane. It is found in the cytoplasm. The enzyme catalyses UDP-2-N,3-O-bis[(3R)-3-hydroxytetradecanoyl]-alpha-D-glucosamine + H2O = 2-N,3-O-bis[(3R)-3-hydroxytetradecanoyl]-alpha-D-glucosaminyl 1-phosphate + UMP + 2 H(+). Its pathway is glycolipid biosynthesis; lipid IV(A) biosynthesis; lipid IV(A) from (3R)-3-hydroxytetradecanoyl-[acyl-carrier-protein] and UDP-N-acetyl-alpha-D-glucosamine: step 4/6. In terms of biological role, hydrolyzes the pyrophosphate bond of UDP-2,3-diacylglucosamine to yield 2,3-diacylglucosamine 1-phosphate (lipid X) and UMP by catalyzing the attack of water at the alpha-P atom. Involved in the biosynthesis of lipid A, a phosphorylated glycolipid that anchors the lipopolysaccharide to the outer membrane of the cell. This chain is UDP-2,3-diacylglucosamine hydrolase, found in Haemophilus influenzae (strain ATCC 51907 / DSM 11121 / KW20 / Rd).